The following is a 393-amino-acid chain: Carbamoyl phosphate synthase small chain (393 aa).

The interval 1–194 (MSKDTTTYQG…TYVIEAEGEE (194 aa)) is CPSase. The L-glutamine site is built by Ser61, Gly245, and Gly247. The region spanning 195–390 (RHTVVAYDLG…VELMDADAQK (196 aa)) is the Glutamine amidotransferase type-1 domain. The Nucleophile role is filled by Cys273. L-glutamine is bound by residues Phe274, Gln277, Asn315, Gly317, and Phe318. Residues His363 and Glu365 contribute to the active site.

Belongs to the CarA family. In terms of assembly, composed of two chains; the small (or glutamine) chain promotes the hydrolysis of glutamine to ammonia, which is used by the large (or ammonia) chain to synthesize carbamoyl phosphate. Tetramer of heterodimers (alpha,beta)4.

The catalysed reaction is hydrogencarbonate + L-glutamine + 2 ATP + H2O = carbamoyl phosphate + L-glutamate + 2 ADP + phosphate + 2 H(+). The enzyme catalyses L-glutamine + H2O = L-glutamate + NH4(+). Its pathway is amino-acid biosynthesis; L-arginine biosynthesis; carbamoyl phosphate from bicarbonate: step 1/1. It functions in the pathway pyrimidine metabolism; UMP biosynthesis via de novo pathway; (S)-dihydroorotate from bicarbonate: step 1/3. Functionally, small subunit of the glutamine-dependent carbamoyl phosphate synthetase (CPSase). CPSase catalyzes the formation of carbamoyl phosphate from the ammonia moiety of glutamine, carbonate, and phosphate donated by ATP, constituting the first step of 2 biosynthetic pathways, one leading to arginine and/or urea and the other to pyrimidine nucleotides. The small subunit (glutamine amidotransferase) binds and cleaves glutamine to supply the large subunit with the substrate ammonia. The polypeptide is Carbamoyl phosphate synthase small chain (Corynebacterium glutamicum (strain ATCC 13032 / DSM 20300 / JCM 1318 / BCRC 11384 / CCUG 27702 / LMG 3730 / NBRC 12168 / NCIMB 10025 / NRRL B-2784 / 534)).